A 261-amino-acid chain; its full sequence is Cytochrome c oxidase subunit 3 (261 aa).

The Mitochondrial matrix segment spans residues 1-15; it reads MAHQAHAYHMVDPSP. Residues 16-34 form a helical membrane-spanning segment; the sequence is WPLTGAVAALLMSSGLAIW. At 35-40 the chain is on the mitochondrial intermembrane side; the sequence is FHLHSM. Residues 41-66 form a helical membrane-spanning segment; sequence TLIVLGMILLILTMIQWWRDIIREGT. Topologically, residues 67–72 are mitochondrial matrix; the sequence is FQGHHT. The chain crosses the membrane as a helical span at residues 73–105; that stretch reads PPVQKGLRYGMILFITSEVFFFLGFFWAFYHSS. The Mitochondrial intermembrane segment spans residues 106 to 128; that stretch reads LAPTPELGGCWPPTGLTTLDPFE. A helical transmembrane segment spans residues 129–152; that stretch reads VPLLNTAVLLASGVTVTWAHHSLM. Topologically, residues 153–155 are mitochondrial matrix; that stretch reads EGE. Residues 156 to 183 form a helical membrane-spanning segment; that stretch reads RKQAIQSLALTILLGLYFTALQAMEYYE. The Mitochondrial intermembrane portion of the chain corresponds to 184–190; sequence APFTIAD. The helical transmembrane segment at 191–223 threads the bilayer; that stretch reads GVYGSTFFVATGFHGLHVIIGSTFLAVCLLRQV. The Mitochondrial matrix portion of the chain corresponds to 224-232; it reads LFHFTSDHH. The chain crosses the membrane as a helical span at residues 233–256; the sequence is FGFEAAAWYWHFVDVVWLFLYVSI. The Mitochondrial intermembrane portion of the chain corresponds to 257–261; that stretch reads YWWGS.

This sequence belongs to the cytochrome c oxidase subunit 3 family. In terms of assembly, component of the cytochrome c oxidase (complex IV, CIV), a multisubunit enzyme composed of 14 subunits. The complex is composed of a catalytic core of 3 subunits MT-CO1, MT-CO2 and MT-CO3, encoded in the mitochondrial DNA, and 11 supernumerary subunits COX4I, COX5A, COX5B, COX6A, COX6B, COX6C, COX7A, COX7B, COX7C, COX8 and NDUFA4, which are encoded in the nuclear genome. The complex exists as a monomer or a dimer and forms supercomplexes (SCs) in the inner mitochondrial membrane with NADH-ubiquinone oxidoreductase (complex I, CI) and ubiquinol-cytochrome c oxidoreductase (cytochrome b-c1 complex, complex III, CIII), resulting in different assemblies (supercomplex SCI(1)III(2)IV(1) and megacomplex MCI(2)III(2)IV(2)).

Its subcellular location is the mitochondrion inner membrane. It catalyses the reaction 4 Fe(II)-[cytochrome c] + O2 + 8 H(+)(in) = 4 Fe(III)-[cytochrome c] + 2 H2O + 4 H(+)(out). Its function is as follows. Component of the cytochrome c oxidase, the last enzyme in the mitochondrial electron transport chain which drives oxidative phosphorylation. The respiratory chain contains 3 multisubunit complexes succinate dehydrogenase (complex II, CII), ubiquinol-cytochrome c oxidoreductase (cytochrome b-c1 complex, complex III, CIII) and cytochrome c oxidase (complex IV, CIV), that cooperate to transfer electrons derived from NADH and succinate to molecular oxygen, creating an electrochemical gradient over the inner membrane that drives transmembrane transport and the ATP synthase. Cytochrome c oxidase is the component of the respiratory chain that catalyzes the reduction of oxygen to water. Electrons originating from reduced cytochrome c in the intermembrane space (IMS) are transferred via the dinuclear copper A center (CU(A)) of subunit 2 and heme A of subunit 1 to the active site in subunit 1, a binuclear center (BNC) formed by heme A3 and copper B (CU(B)). The BNC reduces molecular oxygen to 2 water molecules using 4 electrons from cytochrome c in the IMS and 4 protons from the mitochondrial matrix. In Danio rerio (Zebrafish), this protein is Cytochrome c oxidase subunit 3 (mt-co3).